We begin with the raw amino-acid sequence, 1945 residues long: Rho GTPase-activating protein 21 (1945 aa).

A disordered region spans residues 26–53 (CEVSKNKDGKDQGEPVSPSEDEPFSWPG). A compositionally biased stretch (basic and acidic residues) spans 29–38 (SKNKDGKDQG). A phosphoserine mark is found at serine 42 and serine 63. Residues 56-165 (TVMLKRTSQG…TLELSVMPKD (110 aa)) form the PDZ domain. Disordered stretches follow at residues 210 to 229 (TAQPVETCPPDSLPNKQQTS) and 326 to 365 (HQTTGSRSLEPSGILLKSGNYSGHSEGISSSRSQAVDSPP). Positions 347–358 (SGHSEGISSSRS) are enriched in low complexity. Position 454 is a phosphoserine (serine 454). Residues 499-512 (EATATVNSESQIPD) are compositionally biased toward polar residues. Residues 499 to 519 (EATATVNSESQIPDSNGERKQ) form a disordered region. 2 positions are modified to omega-N-methylarginine: arginine 549 and arginine 569. Disordered stretches follow at residues 573-647 (PVSQ…RPVN) and 674-702 (EVSSCLPGTSAKTSPQLSENLGTSDLELP). Over residues 589 to 600 (SNRNFPTTTGVS) the composition is skewed to polar residues. Phosphoserine is present on residues serine 610 and serine 619. The span at 674-696 (EVSSCLPGTSAKTSPQLSENLGT) shows a compositional bias: polar residues. Residue threonine 741 is modified to Phosphothreonine. Phosphoserine occurs at positions 851, 856, and 875. Disordered stretches follow at residues 852–879 (HDQESVGPPSLDGQHSSKTERSKSYDEG) and 902–921 (ITDSQKSSEDSGSRKGSSSE). Residues 866-879 (HSSKTERSKSYDEG) are compositionally biased toward basic and acidic residues. Position 876 is a phosphotyrosine (tyrosine 876). A phosphoserine mark is found at serine 918, serine 920, serine 948, serine 1093, and serine 1109. Residues 924–1091 (SDAAREGWLQ…AKSEPKTQSP (168 aa)) form an interaction with ARF1 and ARF6 region. A PH domain is found at 925 to 1034 (DAAREGWLQF…WIKTIQESSN (110 aa)). The tract at residues 1080–1120 (LGAKSEPKTQSPHSPKEESERKLLSKDDTSPPKDKGTWRRG) is disordered. A compositionally biased stretch (basic and acidic residues) spans 1093–1116 (SPKEESERKLLSKDDTSPPKDKGT). In terms of domain architecture, Rho-GAP spans 1141–1333 (VRLDDCPPAH…TLIQHHDWFF (193 aa)). Disordered stretches follow at residues 1373 to 1396 (PGDVSDSATSDSAKSKGSWGSGKD), 1412 to 1632 (SRKR…PVFP), 1649 to 1794 (ARVS…LGGH), and 1846 to 1945 (RTSA…ETPP). Over residues 1377–1395 (SDSATSDSAKSKGSWGSGK) the composition is skewed to low complexity. Phosphoserine is present on residues serine 1412, serine 1426, and serine 1427. Basic and acidic residues-rich tracts occupy residues 1435 to 1457 (FFKKENTEQSHSEIKEESKRESE) and 1471 to 1488 (SNTKKDSGTTKEEKKIPW). Residue lysine 1438 forms a Glycyl lysine isopeptide (Lys-Gly) (interchain with G-Cter in SUMO) linkage. Threonine 1504 is subject to Phosphothreonine. Low complexity-rich tracts occupy residues 1531-1556 (SDSGTLLSTSSQASLLRSSTKKSTSP) and 1569-1589 (TTTSDYSTTSSTTYLTSLDSS). Residues 1579-1848 (STTYLTSLDS…WLARERVRTS (270 aa)) form an interaction with CTNNA1 region. A compositionally biased stretch (polar residues) spans 1590–1599 (RLSPEVQSVA). A compositionally biased stretch (basic and acidic residues) spans 1611 to 1621 (SELVSEGRPVE). A Phosphoserine modification is found at serine 1656. Composition is skewed to polar residues over residues 1658–1681 (GSEASCTEGSLTPSLDSRRQQFSS) and 1729–1738 (STGSLLTPSR). Phosphothreonine is present on threonine 1669. A Phosphoserine modification is found at serine 1729. The span at 1739–1757 (SESEKQEATWKTKIADRLK) shows a compositional bias: basic and acidic residues. The span at 1782 to 1792 (RKNIKRRHTLG) shows a compositional bias: basic residues. Positions 1871-1882 (PISTHSPPSQQP) are enriched in polar residues. Residues 1887–1896 (AATSTLASTS) show a composition bias toward low complexity. Residue threonine 1902 is modified to Phosphothreonine. A Phosphoserine modification is found at serine 1906. Residues 1907-1927 (PDQINRESFQNMSQNASSTAN) are compositionally biased toward polar residues. The segment covering 1932–1945 (KQSESPDTKAETPP) has biased composition (basic and acidic residues).

As to quaternary structure, interacts with CTNNA1. Interacts with GTP-bound ARF1 and probably ARF6. In terms of processing, sumoylated with SUMO2 and SUMO3 in proliferating lymphocytes.

The protein resides in the golgi apparatus membrane. Its subcellular location is the cell junction. The protein localises to the cytoplasmic vesicle membrane. It is found in the cytoplasm. It localises to the cytoskeleton. Functions as a GTPase-activating protein (GAP) for RHOA and CDC42. Downstream partner of ARF1 which may control Golgi apparatus structure and function. Also required for CTNNA1 recruitment to adherens junctions. This chain is Rho GTPase-activating protein 21, found in Mus musculus (Mouse).